The primary structure comprises 156 residues: Small ribosomal subunit protein uS7 (156 aa).

Belongs to the universal ribosomal protein uS7 family. In terms of assembly, part of the 30S ribosomal subunit. Contacts proteins S9 and S11.

In terms of biological role, one of the primary rRNA binding proteins, it binds directly to 16S rRNA where it nucleates assembly of the head domain of the 30S subunit. Is located at the subunit interface close to the decoding center, probably blocks exit of the E-site tRNA. The chain is Small ribosomal subunit protein uS7 from Lactobacillus johnsonii (strain CNCM I-12250 / La1 / NCC 533).